A 405-amino-acid polypeptide reads, in one-letter code: PP2A regulatory subunit TAP46 (405 aa).

Disordered stretches follow at residues 159–189 and 352–405; these read ERRG…SEEE and ATTS…TPCG. Positions 165 to 174 are enriched in polar residues; the sequence is TKASALSTPV. 2 stretches are compositionally biased toward acidic residues: residues 176–189 and 367–377; these read SGED…SEEE and EDEEDDDEDEE. Over residues 378-393 the composition is skewed to basic and acidic residues; that stretch reads AVMKARAFDDWKDDNP.

It belongs to the IGBP1/TAP42 family. Interacts with the 36 kDa catalytic subunit (subunit C) of PP2A. Interacts with PP2A1 and PP2A2. Interacts with PP2A3, PPX1 and FYPP1. Interacts with FYPP3 and ABI5. Interacts with ATPK1/S6K1 and ATPK2/S6K2. Interacts with TIP41L. Post-translationally, phosphorylated by TOR kinase in vitro. In terms of tissue distribution, ubiquitous. Highly expressed in seed, and particularly in the embryo.

Functionally, involved in the positive regulation of the TOR signaling pathway. Acts as a negative regulator of PP2A catalytic activity. Plays a positive role in the ABA-regulated inhibition of germination, probably throught its interaction with ABI5. This is PP2A regulatory subunit TAP46 from Arabidopsis thaliana (Mouse-ear cress).